The primary structure comprises 285 residues: DNA repair protein RecO (285 aa).

It belongs to the RecO family.

Functionally, involved in DNA repair and RecF pathway recombination. This chain is DNA repair protein RecO, found in Synechococcus sp. (strain JA-2-3B'a(2-13)) (Cyanobacteria bacterium Yellowstone B-Prime).